Consider the following 529-residue polypeptide: Alkaline phosphatase, germ cell type (529 aa).

Positions 1–18 are cleaved as a signal peptide; sequence MWGACLLLLGLSLQVCPS. Residue D60 participates in Mg(2+) binding. D60 and S110 together coordinate Zn(2+). Residue S110 is the Phosphoserine intermediate of the active site. A disulfide bridge connects residues C139 and C201. The N-linked (GlcNAc...) asparagine glycan is linked to N140. S173 is a Mg(2+) binding site. Position 234 (E234) interacts with Ca(2+). 2 N-linked (GlcNAc...) asparagine glycosylation sites follow: N267 and N277. Residues F287, E288, and D303 each coordinate Ca(2+). Position 329 (E329) interacts with Mg(2+). Zn(2+)-binding residues include D334, H338, D375, H376, and H450. A disulfide bridge connects residues C485 and C492. Residue S502 is the site of GPI-anchor amidated serine attachment. Residues 503–529 constitute a propeptide, removed in mature form; that stretch reads AVSPGYMSTLLCLLAGKMLMLMAAAEP.

It belongs to the alkaline phosphatase family. As to quaternary structure, homodimer. Requires Mg(2+) as cofactor. Zn(2+) is required as a cofactor. The cofactor is Ca(2+). In terms of tissue distribution, embryo and testis.

Its subcellular location is the cell membrane. It catalyses the reaction a phosphate monoester + H2O = an alcohol + phosphate. With respect to regulation, inhibited by L-leucine, EDTA and heat. Alkaline phosphatase that can hydrolyze various phosphate compounds. This Mus musculus (Mouse) protein is Alkaline phosphatase, germ cell type (Alpg).